Consider the following 140-residue polypeptide: Sex-regulated protein janus-B (140 aa).

R42 is a binding site for substrate. Residue H69 is the Proton acceptor of the active site. 110 to 112 (SRT) lines the substrate pocket.

Belongs to the janus family.

Its function is as follows. JanA and janB regulate somatic sex differentiation. This Drosophila simulans (Fruit fly) protein is Sex-regulated protein janus-B (janB).